The following is a 175-amino-acid chain: MTTTEFPSAIAKARFVRVSPRKARRVIDLVRGRSVADALDILRWAPQAASEPVARVIASAAANAQNNNGLDPETLVVATVYAGEGPTAKRIRPRAQGRAFRIRRRTSHITVVVESRPVKDQRSAASTKARRAEASKTAGRAPAKKAGASSGATKMPPKKASVKTSEASETKGGSD.

A disordered region spans residues 113-175; sequence VESRPVKDQR…EASETKGGSD (63 aa). Residues 136-154 are compositionally biased toward low complexity; the sequence is KTAGRAPAKKAGASSGATK. The span at 166–175 shows a compositional bias: basic and acidic residues; the sequence is EASETKGGSD.

The protein belongs to the universal ribosomal protein uL22 family. In terms of assembly, part of the 50S ribosomal subunit.

In terms of biological role, this protein binds specifically to 23S rRNA; its binding is stimulated by other ribosomal proteins, e.g. L4, L17, and L20. It is important during the early stages of 50S assembly. It makes multiple contacts with different domains of the 23S rRNA in the assembled 50S subunit and ribosome. Its function is as follows. The globular domain of the protein is located near the polypeptide exit tunnel on the outside of the subunit, while an extended beta-hairpin is found that lines the wall of the exit tunnel in the center of the 70S ribosome. This Mycobacterium leprae (strain TN) protein is Large ribosomal subunit protein uL22.